A 222-amino-acid polypeptide reads, in one-letter code: Putative metal transport protein MJ1569 (222 aa).

6 helical membrane passes run 3 to 23 (IPDG…MIPI), 39 to 59 (LPLL…NLPV), 81 to 101 (WVAT…FGDG), 102 to 122 (GITC…FVGY), 135 to 155 (VIAS…VAGF), and 180 to 200 (AFAH…IVVW).

It belongs to the CbiM family.

The protein resides in the cell membrane. Its function is as follows. May be involved in metal transport. The chain is Putative metal transport protein MJ1569 from Methanocaldococcus jannaschii (strain ATCC 43067 / DSM 2661 / JAL-1 / JCM 10045 / NBRC 100440) (Methanococcus jannaschii).